The following is a 518-amino-acid chain: Integrator complex subunit 14 (518 aa).

The VWFA domain occupies 2–204 (PTVVVMDVSL…KNVQSMFGKL (203 aa)). Ser-10, Ser-12, and Thr-86 together coordinate Mg(2+).

It belongs to the Integrator subunit 14 family. Component of the Integrator complex, composed of core subunits INTS1, INTS2, INTS3, INTS4, INTS5, INTS6, INTS7, INTS8, INTS9/RC74, INTS10, INTS11/CPSF3L, INTS12, INTS13, INTS14 and INTS15. The core complex associates with protein phosphatase 2A subunits PPP2CA and PPP2R1A, to form the Integrator-PP2A (INTAC) complex. INTS14 is part of the tail subcomplex, composed of INTS10, INTS13, INTS14 and INTS15.

It localises to the nucleus. Component of the integrator complex, a multiprotein complex that terminates RNA polymerase II (Pol II) transcription in the promoter-proximal region of genes. The integrator complex provides a quality checkpoint during transcription elongation by driving premature transcription termination of transcripts that are unfavorably configured for transcriptional elongation: the complex terminates transcription by (1) catalyzing dephosphorylation of the C-terminal domain (CTD) of Pol II subunit POLR2A/RPB1 and SUPT5H/SPT5, (2) degrading the exiting nascent RNA transcript via endonuclease activity and (3) promoting the release of Pol II from bound DNA. The integrator complex is also involved in terminating the synthesis of non-coding Pol II transcripts, such as enhancer RNAs (eRNAs), small nuclear RNAs (snRNAs), telomerase RNAs and long non-coding RNAs (lncRNAs). Within the integrator complex, INTS14 is part of the integrator tail module that acts as a platform for the recruitment of transcription factors at promoters. The chain is Integrator complex subunit 14 from Xenopus tropicalis (Western clawed frog).